The following is a 311-amino-acid chain: Syndecan-1 (311 aa).

Positions 1–22 (MRRAALWLWLCALALRLQPALL) are cleaved as a signal peptide. At 23-255 (HSVAVNMPPE…GLLDRKEVLG (233 aa)) the chain is on the extracellular side. 2 disordered regions span residues 31 to 85 (PEDQ…PDAI) and 141 to 244 (TMAP…TGAS). Over residues 32-42 (EDQDGSGDDSD) the composition is skewed to acidic residues. A glycan (O-linked (Xyl...) (chondroitin sulfate) serine) is linked at Ser-37. A glycan (N-linked (GlcNAc...) asparagine) is linked at Asn-43. Residues Ser-45 and Ser-47 are each glycosylated (O-linked (Xyl...) (heparan sulfate) serine). Positions 71–84 (TTTATAPEPTSPDA) are enriched in low complexity. 2 stretches are compositionally biased toward basic and acidic residues: residues 151–162 (PHRDVQPDHHET) and 169–180 (GRMEPHRPHVEE). O-linked (Xyl...) (chondroitin sulfate) serine glycosylation is found at Ser-204 and Ser-214. The segment covering 215 to 226 (GENAAGAAGEPG) has biased composition (low complexity). The helical transmembrane segment at 256 to 276 (GVIAGGLVGLIFAVCLVGFML) threads the bilayer. Topologically, residues 277-311 (YRMKKKDEGSYSLEEPKQANGGAYQKPTKQEEFYA) are cytoplasmic. Positions 285 to 311 (GSYSLEEPKQANGGAYQKPTKQEEFYA) are disordered. Ser-286 carries the post-translational modification Phosphoserine.

The protein belongs to the syndecan proteoglycan family. In terms of assembly, interacts with CDCP1. Interacts (via C-terminus) with TIAM1 (via PDZ domain). Interacts with MDK. Post-translationally, shedding is enhanced by a number of factors such as heparanase, thrombin or EGF. Also by stress and wound healing. PMA-mediated shedding is inhibited by TIMP3.

The protein localises to the membrane. Its subcellular location is the secreted. The protein resides in the extracellular exosome. Functionally, cell surface proteoglycan that contains both heparan sulfate and chondroitin sulfate and that links the cytoskeleton to the interstitial matrix. Regulates exosome biogenesis in concert with SDCBP and PDCD6IP. Able to induce its own expression in dental mesenchymal cells and also in the neighboring dental epithelial cells via an MSX1-mediated pathway. In Bos taurus (Bovine), this protein is Syndecan-1.